A 223-amino-acid chain; its full sequence is Putative germin-like protein 2-3 (223 aa).

An N-terminal signal peptide occupies residues 1 to 28 (MAAIRASFLLAAAALLALWCSDHGGVVA). Cys38 and Cys53 are disulfide-bonded. One can recognise a Cupin type-1 domain in the interval 67–217 (SGLHMAGNTT…AFQVEKTVVD (151 aa)). A glycan (N-linked (GlcNAc...) asparagine) is linked at Asn74. His115, His117, Glu122, and His163 together coordinate Mn(2+).

This sequence belongs to the germin family. Oligomer (believed to be a pentamer but probably hexamer).

The protein localises to the secreted. It localises to the extracellular space. The protein resides in the apoplast. May play a role in plant defense. Probably has no oxalate oxidase activity even if the active site is conserved. The protein is Putative germin-like protein 2-3 of Oryza sativa subsp. japonica (Rice).